A 404-amino-acid chain; its full sequence is Argininosuccinate synthase (404 aa).

Residues 12 to 20 (AYSGGLDTS) and alanine 40 each bind ATP. Positions 92 and 97 each coordinate L-citrulline. Glycine 122 lines the ATP pocket. L-aspartate contacts are provided by threonine 124, asparagine 128, and aspartate 129. Asparagine 128 provides a ligand contact to L-citrulline. The L-citrulline site is built by arginine 132, serine 181, serine 190, glutamate 266, and tyrosine 278.

The protein belongs to the argininosuccinate synthase family. Type 1 subfamily. In terms of assembly, homotetramer.

The protein localises to the cytoplasm. The catalysed reaction is L-citrulline + L-aspartate + ATP = 2-(N(omega)-L-arginino)succinate + AMP + diphosphate + H(+). It functions in the pathway amino-acid biosynthesis; L-arginine biosynthesis; L-arginine from L-ornithine and carbamoyl phosphate: step 2/3. In Erwinia tasmaniensis (strain DSM 17950 / CFBP 7177 / CIP 109463 / NCPPB 4357 / Et1/99), this protein is Argininosuccinate synthase.